We begin with the raw amino-acid sequence, 215 residues long: AN1-type zinc finger protein C1271.05c (215 aa).

Positions 116–128 (IPSISKSNLTNPP) are enriched in polar residues. The segment at 116-138 (IPSISKSNLTNPPLESEKSSDKA) is disordered. The AN1-type zinc finger occupies 144-193 (ATSRRRCCHPTCTRITLRLAGNCLHCNGRFCAAHRLMEDHDCVALFSLRK). Residues cysteine 150, cysteine 155, cysteine 166, cysteine 169, cysteine 174, histidine 177, histidine 183, and cysteine 185 each contribute to the Zn(2+) site.

Its subcellular location is the cytoplasm. The protein localises to the nucleus. The sequence is that of AN1-type zinc finger protein C1271.05c from Schizosaccharomyces pombe (strain 972 / ATCC 24843) (Fission yeast).